Here is a 469-residue protein sequence, read N- to C-terminus: Probable Xaa-Pro aminopeptidase PEPP (469 aa).

Positions 257, 268, 391, and 436 each coordinate Mn(2+).

It belongs to the peptidase M24B family. Mn(2+) is required as a cofactor.

It catalyses the reaction Release of any N-terminal amino acid, including proline, that is linked to proline, even from a dipeptide or tripeptide.. In terms of biological role, catalyzes the removal of a penultimate prolyl residue from the N-termini of peptides. This Fusarium vanettenii (strain ATCC MYA-4622 / CBS 123669 / FGSC 9596 / NRRL 45880 / 77-13-4) (Fusarium solani subsp. pisi) protein is Probable Xaa-Pro aminopeptidase PEPP (PEPP).